We begin with the raw amino-acid sequence, 518 residues long: G-protein coupled receptor 161 (518 aa).

The Extracellular segment spans residues 1–26; that stretch reads MNSSSDGANEGAGAAADNGPTKVAES. A glycan (N-linked (GlcNAc...) asparagine) is linked at Asn2. Residues 27-47 form a helical membrane-spanning segment; sequence IAIIIIDILICLGNLVIVVTL. Residues 48–59 lie on the Cytoplasmic side of the membrane; the sequence is YKKSYLLSLSNK. The helical transmembrane segment at 60 to 80 threads the bilayer; sequence FVFSLTFSNLLLSMLVLPFVV. At 81 to 97 the chain is on the extracellular side; sequence VSSILREWIFGVVWCNF. Cys95 and Cys173 are disulfide-bonded. Residue Asn96 is glycosylated (N-linked (GlcNAc...) asparagine). A helical transmembrane segment spans residues 98–118; sequence SALLYMLISSASMLTLGIIAI. The Cytoplasmic portion of the chain corresponds to 119–138; sequence DRYYAVLYPMVYPMKITGNR. The helical transmembrane segment at 139-159 threads the bilayer; the sequence is AVLALVYVWLHSLIGCLPPLF. At 160-185 the chain is on the extracellular side; the sequence is GWSTLEFDHFKWMCVAAWHKEAGYTA. Residues 186–206 traverse the membrane as a helical segment; it reads FWQVWCALLPFIVMMICYGFI. At 207 to 264 the chain is on the cytoplasmic side; it reads FRVARIKARKIHCGTVIIVQEASQKNGRKNSSTSTSSSGSRKNGFSSIVYSANQCKAL. Residues 265 to 285 form a helical membrane-spanning segment; sequence ITILVVIGAFVLTWGPYMIVI. Over 286–301 the chain is Extracellular; sequence STEALKGKNSVSPVLE. The helical transmembrane segment at 302-322 threads the bilayer; it reads TLATWLSFTSAICHPLIYGLW. The Cytoplasmic portion of the chain corresponds to 323–518; the sequence is NKTVRKELLG…GNIETSKCDV (196 aa). Residues 429–448 form a disordered region; that stretch reads EVEQKNDARTMPTQPTAPSE. Over residues 439-448 the composition is skewed to polar residues; sequence MPTQPTAPSE.

This sequence belongs to the G-protein coupled receptor 1 family.

Its subcellular location is the cell projection. It localises to the cilium membrane. The protein resides in the cell membrane. In terms of biological role, key negative regulator of Shh signaling during neural tube development. Recruited to primary cilia and acts as a regulator of the PKA-dependent basal repression machinery in Shh signaling by increasing cAMP levels, leading to promote the PKA-dependent processing of gli3 into gli3r and repress the Shh signaling. In presence of shh, it is removed from primary cilia, preventing its activity and allowing activation of the Shh signaling. The protein is G-protein coupled receptor 161 (gpr161) of Xenopus tropicalis (Western clawed frog).